We begin with the raw amino-acid sequence, 418 residues long: Cell division protein FtsA (418 aa).

Belongs to the FtsA/MreB family. In terms of assembly, self-interacts. Interacts with FtsZ.

It is found in the cell inner membrane. Its function is as follows. Cell division protein that is involved in the assembly of the Z ring. May serve as a membrane anchor for the Z ring. This Buchnera aphidicola subsp. Schizaphis graminum (strain Sg) protein is Cell division protein FtsA.